A 510-amino-acid chain; its full sequence is NAD(P)H-quinone oxidoreductase subunit 2 B, chloroplastic (510 aa).

13 consecutive transmembrane segments (helical) span residues 24 to 44 (LLLF…GLIL), 57 to 77 (IPWL…ALLF), 99 to 119 (IFQF…VEYI), 124 to 144 (MAIT…MFLC), 150 to 170 (ITIF…SGYT), 183 to 203 (YLLM…WLYG), 227 to 247 (PGIS…LSPA), 295 to 315 (WHLL…LIAI), 323 to 343 (MLAY…IVGD), 347 to 367 (GYAS…GTFA), 395 to 415 (ALSS…AGFF), 418 to 438 (LHLF…IGLL), and 484 to 504 (MIVC…IIAI).

Belongs to the complex I subunit 2 family. In terms of assembly, NDH is composed of at least 16 different subunits, 5 of which are encoded in the nucleus.

It is found in the plastid. The protein resides in the chloroplast thylakoid membrane. It catalyses the reaction a plastoquinone + NADH + (n+1) H(+)(in) = a plastoquinol + NAD(+) + n H(+)(out). The enzyme catalyses a plastoquinone + NADPH + (n+1) H(+)(in) = a plastoquinol + NADP(+) + n H(+)(out). Functionally, NDH shuttles electrons from NAD(P)H:plastoquinone, via FMN and iron-sulfur (Fe-S) centers, to quinones in the photosynthetic chain and possibly in a chloroplast respiratory chain. The immediate electron acceptor for the enzyme in this species is believed to be plastoquinone. Couples the redox reaction to proton translocation, and thus conserves the redox energy in a proton gradient. This is NAD(P)H-quinone oxidoreductase subunit 2 B, chloroplastic from Liriodendron tulipifera (Tuliptree).